Consider the following 102-residue polypeptide: Large ribosomal subunit protein uL24 (102 aa).

It belongs to the universal ribosomal protein uL24 family. In terms of assembly, part of the 50S ribosomal subunit.

Its function is as follows. One of two assembly initiator proteins, it binds directly to the 5'-end of the 23S rRNA, where it nucleates assembly of the 50S subunit. Functionally, one of the proteins that surrounds the polypeptide exit tunnel on the outside of the subunit. The polypeptide is Large ribosomal subunit protein uL24 (Paraburkholderia phytofirmans (strain DSM 17436 / LMG 22146 / PsJN) (Burkholderia phytofirmans)).